The chain runs to 215 residues: Protein Thf1 (215 aa).

Residues 188-209 (IELVQETIAAERRKKERRQAEQ) are a coiled coil.

The protein belongs to the THF1 family.

Its function is as follows. May be involved in photosynthetic membrane biogenesis. In Synechococcus sp. (strain CC9902), this protein is Protein Thf1.